The chain runs to 241 residues: Diacetyl reductase [(S)-acetoin forming] (241 aa).

6-30 contributes to the NAD(+) binding site; it reads LVTGAGQGIGKAIALRLVKDGFAVA. Ser-139 is a binding site for substrate. The active-site Proton acceptor is Tyr-152. Residue Lys-156 is part of the active site.

It belongs to the short-chain dehydrogenases/reductases (SDR) family. As to quaternary structure, homotetramer.

The catalysed reaction is (S)-acetoin + NAD(+) = diacetyl + NADH + H(+). Functionally, catalyzes the irreversible reduction of 2,3-butanediol to (S)-acetoin in the presence of NADH. This chain is Diacetyl reductase [(S)-acetoin forming] (budC), found in Raoultella terrigena (Klebsiella terrigena).